Consider the following 344-residue polypeptide: WW domain binding protein 1-like (344 aa).

A helical transmembrane segment spans residues L42–H62. Disordered stretches follow at residues L132–G250 and C302–P321. Over residues P145–S173 the composition is skewed to low complexity. A Phosphoserine modification is found at S173. Over residues L212–S228 the composition is skewed to basic and acidic residues.

The protein localises to the membrane. In Rattus norvegicus (Rat), this protein is WW domain binding protein 1-like (Wbp1l).